The sequence spans 240 residues: Phosphoribosyl isomerase A (240 aa).

Asp-11 serves as the catalytic Proton acceptor. Residue Asp-130 is the Proton donor of the active site.

The protein belongs to the HisA/HisF family. Monomer.

It is found in the cytoplasm. It catalyses the reaction 1-(5-phospho-beta-D-ribosyl)-5-[(5-phospho-beta-D-ribosylamino)methylideneamino]imidazole-4-carboxamide = 5-[(5-phospho-1-deoxy-D-ribulos-1-ylimino)methylamino]-1-(5-phospho-beta-D-ribosyl)imidazole-4-carboxamide. The catalysed reaction is N-(5-phospho-beta-D-ribosyl)anthranilate = 1-(2-carboxyphenylamino)-1-deoxy-D-ribulose 5-phosphate. Its pathway is amino-acid biosynthesis; L-histidine biosynthesis; L-histidine from 5-phospho-alpha-D-ribose 1-diphosphate: step 4/9. It participates in amino-acid biosynthesis; L-tryptophan biosynthesis; L-tryptophan from chorismate: step 3/5. Functionally, catalyzes the isomerization of the aminoaldose moiety of ProFAR to the aminoketose of PRFAR in the biosynthesis pathway for histidine and the isomerization of the aminoaldose PRA to the aminoketose CdRP in the biosynthsis pathway for tryptophan. The protein is Phosphoribosyl isomerase A (priA) of Streptomyces coelicolor (strain ATCC BAA-471 / A3(2) / M145).